We begin with the raw amino-acid sequence, 332 residues long: Cyclin-dependent kinase 1 (332 aa).

Positions 22–312 (FTKLEKIGEG…AKKALVHPYF (291 aa)) constitute a Protein kinase domain. Residues 28-36 (IGEGTYGVV) and K51 each bind ATP. The residue at position 32 (T32) is a Phosphothreonine. Y33 bears the Phosphotyrosine mark. D146 functions as the Proton acceptor in the catalytic mechanism.

Belongs to the protein kinase superfamily. CMGC Ser/Thr protein kinase family. CDC2/CDKX subfamily. Forms a stable but non-covalent complex with a regulatory subunit and with a cyclin. Interacts with cks-1. Phosphorylated.

The protein resides in the nucleus. Its subcellular location is the cytoplasm. It is found in the cytoskeleton. It localises to the microtubule organizing center. The protein localises to the centrosome. The protein resides in the chromosome. It catalyses the reaction L-seryl-[protein] + ATP = O-phospho-L-seryl-[protein] + ADP + H(+). The enzyme catalyses L-threonyl-[protein] + ATP = O-phospho-L-threonyl-[protein] + ADP + H(+). The catalysed reaction is [DNA-directed RNA polymerase] + ATP = phospho-[DNA-directed RNA polymerase] + ADP + H(+). Its activity is regulated as follows. Phosphorylation both activates and inactivates the enzyme depending on the site of phosphorylation. Its function is as follows. Plays a key role in the control of the eukaryotic cell cycle. Required for entry into S-phase and mitosis. Acts as a component of the kinase complex that phosphorylates the repetitive C-terminus of RNA polymerase II. May function in concert with npp-16 to arrest prophase blastomeres in response to anoxia. The sequence is that of Cyclin-dependent kinase 1 (cdk-1) from Caenorhabditis elegans.